Here is a 201-residue protein sequence, read N- to C-terminus: Recombination protein RecR (201 aa).

The C4-type zinc finger occupies 60–75; sequence CSRCGNVDTVDPCTVC. In terms of domain architecture, Toprim spans 83–178; sequence SVIIVVEDVS…KITRLAHGVP (96 aa).

It belongs to the RecR family.

Its function is as follows. May play a role in DNA repair. It seems to be involved in an RecBC-independent recombinational process of DNA repair. It may act with RecF and RecO. This is Recombination protein RecR from Rhizobium etli (strain CIAT 652).